The primary structure comprises 115 residues: Flagellar transcriptional regulator FlhD (115 aa).

Belongs to the FlhD family. In terms of assembly, homodimer; disulfide-linked. Forms a heterohexamer composed of two FlhC and four FlhD subunits. Each FlhC binds a FlhD dimer, forming a heterotrimer, and a hexamer assembles by dimerization of two heterotrimers.

Its subcellular location is the cytoplasm. Functions in complex with FlhC as a master transcriptional regulator that regulates transcription of several flagellar and non-flagellar operons by binding to their promoter region. Activates expression of class 2 flagellar genes, including fliA, which is a flagellum-specific sigma factor that turns on the class 3 genes. Also regulates genes whose products function in a variety of physiological pathways. The protein is Flagellar transcriptional regulator FlhD of Edwardsiella ictaluri (strain 93-146).